The chain runs to 314 residues: Ribosomal protein uL3 glutamine methyltransferase (314 aa).

This sequence belongs to the protein N5-glutamine methyltransferase family. PrmB subfamily.

The enzyme catalyses L-glutaminyl-[ribosomal protein uL3] + S-adenosyl-L-methionine = N(5)-methyl-L-glutaminyl-[ribosomal protein uL3] + S-adenosyl-L-homocysteine + H(+). Functionally, methylates large ribosomal subunit protein uL3 on a specific glutamine residue. This is Ribosomal protein uL3 glutamine methyltransferase from Shewanella oneidensis (strain ATCC 700550 / JCM 31522 / CIP 106686 / LMG 19005 / NCIMB 14063 / MR-1).